We begin with the raw amino-acid sequence, 77 residues long: Small integral membrane protein 5 (77 aa).

The chain crosses the membrane as a helical span at residues 32-52 (IVAFSVIILFTATVLLLLLIA).

It localises to the membrane. The polypeptide is Small integral membrane protein 5 (SMIM5) (Homo sapiens (Human)).